A 134-amino-acid polypeptide reads, in one-letter code: 6,7-dimethyl-8-ribityllumazine synthase (134 aa).

Residues Phe-11, 43–45 (AYD), and 67–69 (AIV) each bind 5-amino-6-(D-ribitylamino)uracil. 72 to 73 (DT) contributes to the (2S)-2-hydroxy-3-oxobutyl phosphate binding site. Catalysis depends on His-75, which acts as the Proton donor. Residue Phe-100 participates in 5-amino-6-(D-ribitylamino)uracil binding. Arg-115 lines the (2S)-2-hydroxy-3-oxobutyl phosphate pocket.

This sequence belongs to the DMRL synthase family.

It carries out the reaction (2S)-2-hydroxy-3-oxobutyl phosphate + 5-amino-6-(D-ribitylamino)uracil = 6,7-dimethyl-8-(1-D-ribityl)lumazine + phosphate + 2 H2O + H(+). The protein operates within cofactor biosynthesis; riboflavin biosynthesis; riboflavin from 2-hydroxy-3-oxobutyl phosphate and 5-amino-6-(D-ribitylamino)uracil: step 1/2. Functionally, catalyzes the formation of 6,7-dimethyl-8-ribityllumazine by condensation of 5-amino-6-(D-ribitylamino)uracil with 3,4-dihydroxy-2-butanone 4-phosphate. This is the penultimate step in the biosynthesis of riboflavin. The chain is 6,7-dimethyl-8-ribityllumazine synthase from Halorubrum lacusprofundi (strain ATCC 49239 / DSM 5036 / JCM 8891 / ACAM 34).